A 165-amino-acid chain; its full sequence is Thiol peroxidase (165 aa).

In terms of domain architecture, Thioredoxin spans 18–165 (PQKGAQAPAF…PNYAAALAAL (148 aa)). Cys-60 acts as the Cysteine sulfenic acid (-SOH) intermediate in catalysis. The cysteines at positions 60 and 94 are disulfide-linked.

Belongs to the peroxiredoxin family. Tpx subfamily. As to quaternary structure, homodimer.

It carries out the reaction a hydroperoxide + [thioredoxin]-dithiol = an alcohol + [thioredoxin]-disulfide + H2O. In terms of biological role, thiol-specific peroxidase that catalyzes the reduction of hydrogen peroxide and organic hydroperoxides to water and alcohols, respectively. Plays a role in cell protection against oxidative stress by detoxifying peroxides. The chain is Thiol peroxidase from Pseudomonas aeruginosa (strain ATCC 15692 / DSM 22644 / CIP 104116 / JCM 14847 / LMG 12228 / 1C / PRS 101 / PAO1).